Consider the following 123-residue polypeptide: Protein HesB, vegetative (123 aa).

Belongs to the HesB/IscA family.

Functionally, may be required for efficient nitrogen fixation. This is Protein HesB, vegetative (hesB2) from Trichormus variabilis (strain ATCC 29413 / PCC 7937) (Anabaena variabilis).